The primary structure comprises 253 residues: Ribosome-inactivating protein saporin-9 (253 aa).

Glu176 is a catalytic residue.

It catalyses the reaction Endohydrolysis of the N-glycosidic bond at one specific adenosine on the 28S rRNA.. Its function is as follows. Ribosome-inactivating protein of type 1, inhibits protein synthesis in animal cells. In Saponaria officinalis (Common soapwort), this protein is Ribosome-inactivating protein saporin-9 (SAP9).